A 1238-amino-acid polypeptide reads, in one-letter code: DNA-directed RNA polymerase subunit beta (1238 aa).

The interval 1187 to 1238 (EGREDTPPEEVYEESYEEGFEEEIEELPEDIDFEPDSFDIENDDLDLEDFDI) is disordered. The span at 1193–1238 (PPEEVYEESYEEGFEEEIEELPEDIDFEPDSFDIENDDLDLEDFDI) shows a compositional bias: acidic residues.

This sequence belongs to the RNA polymerase beta chain family. As to quaternary structure, the RNAP catalytic core consists of 2 alpha, 1 beta, 1 beta' and 1 omega subunit. When a sigma factor is associated with the core the holoenzyme is formed, which can initiate transcription.

The enzyme catalyses RNA(n) + a ribonucleoside 5'-triphosphate = RNA(n+1) + diphosphate. Its function is as follows. DNA-dependent RNA polymerase catalyzes the transcription of DNA into RNA using the four ribonucleoside triphosphates as substrates. This Thermoanaerobacter pseudethanolicus (strain ATCC 33223 / 39E) (Clostridium thermohydrosulfuricum) protein is DNA-directed RNA polymerase subunit beta.